The following is a 197-amino-acid chain: Large ribosomal subunit protein uL18 (197 aa).

This sequence belongs to the universal ribosomal protein uL18 family. Part of the 50S ribosomal subunit. Contacts the 5S and 23S rRNAs.

This is one of the proteins that bind and probably mediate the attachment of the 5S RNA into the large ribosomal subunit, where it forms part of the central protuberance. The sequence is that of Large ribosomal subunit protein uL18 from Sulfolobus acidocaldarius (strain ATCC 33909 / DSM 639 / JCM 8929 / NBRC 15157 / NCIMB 11770).